Consider the following 117-residue polypeptide: Large ribosomal subunit protein bL19 (117 aa).

It belongs to the bacterial ribosomal protein bL19 family.

In terms of biological role, this protein is located at the 30S-50S ribosomal subunit interface and may play a role in the structure and function of the aminoacyl-tRNA binding site. In Shewanella denitrificans (strain OS217 / ATCC BAA-1090 / DSM 15013), this protein is Large ribosomal subunit protein bL19.